The chain runs to 301 residues: Acetylglutamate kinase (301 aa).

Residues 72 to 73 (GG), Arg94, and Asn199 contribute to the substrate site.

Belongs to the acetylglutamate kinase family. ArgB subfamily.

The protein resides in the cytoplasm. The catalysed reaction is N-acetyl-L-glutamate + ATP = N-acetyl-L-glutamyl 5-phosphate + ADP. It participates in amino-acid biosynthesis; L-arginine biosynthesis; N(2)-acetyl-L-ornithine from L-glutamate: step 2/4. Its function is as follows. Catalyzes the ATP-dependent phosphorylation of N-acetyl-L-glutamate. The sequence is that of Acetylglutamate kinase from Bartonella henselae (strain ATCC 49882 / DSM 28221 / CCUG 30454 / Houston 1) (Rochalimaea henselae).